The following is a 347-amino-acid chain: Peptidoglycan recognition protein 3 (347 aa).

Positions 1-26 (MLVSWDHPKMLPRLLGFLALSLLACG) are cleaved as a signal peptide. N-acetylmuramoyl-L-alanine amidase domains lie at 77–185 (LQSQ…KACP) and 206–328 (PAKF…VSNI). N-linked (GlcNAc...) asparagine glycosylation is present at asparagine 120. Intrachain disulfides connect cysteine 184-cysteine 306, cysteine 200-cysteine 244, and cysteine 220-cysteine 226. The peptidoglycan site is built by histidine 237 and tyrosine 248. Residues 270-275 (HTYGYN) form an interaction with murein region.

The protein belongs to the N-acetylmuramoyl-L-alanine amidase 2 family. As to quaternary structure, monomer. Homodimer; disulfide-linked. Heterodimer with PGLYRP4; disulfide-linked. As to expression, detected in lung, spleen and stomach, and at low levels in eye, heart, thymus and testis.

The protein resides in the secreted. In terms of biological role, pattern receptor that binds to murein peptidoglycans (PGN) of Gram-positive bacteria. Has bactericidal activity towards Gram-positive bacteria. May kill Gram-positive bacteria by interfering with peptidoglycan biosynthesis. Also binds to Gram-negative bacteria, and has bacteriostatic activity towards Gram-negative bacteria. Plays a role in innate immunity. This Mus musculus (Mouse) protein is Peptidoglycan recognition protein 3 (Pglyrp3).